The chain runs to 261 residues: 5'-nucleotidase SurE (261 aa).

4 residues coordinate a divalent metal cation: aspartate 12, aspartate 13, serine 43, and asparagine 99.

The protein belongs to the SurE nucleotidase family. Requires a divalent metal cation as cofactor.

The protein resides in the cytoplasm. The catalysed reaction is a ribonucleoside 5'-phosphate + H2O = a ribonucleoside + phosphate. Nucleotidase that shows phosphatase activity on nucleoside 5'-monophosphates. This Polynucleobacter asymbioticus (strain DSM 18221 / CIP 109841 / QLW-P1DMWA-1) (Polynucleobacter necessarius subsp. asymbioticus) protein is 5'-nucleotidase SurE.